Consider the following 280-residue polypeptide: MMTKLVINPVAFQLGSLSVKWYGIIMAVAIVLATWMAISEGKKRQIISDDFVDLLLWAVPLGYVGARIYYVIFEWGYYSKHPNQIIAIWNGGIAIYGGLIAGLIVLLIFCHKRDLPPFLMLDIITPGVMAAQILGRWGNFVNQEAHGGPTTLHFLQSLHLPEFVIQQMKIGGTYYQPTFLYESFFNLIGLIIILSLRHRKHVFKQGEVFMSYLLWYSVVRFFVEGMRTDSLYIFGIIRVSQALSLVLFIATIILWIYRRKVVKPKWYLQGSGLKYPYTRD.

3 helical membrane passes run tryptophan 21–glycine 41, leucine 54–glutamate 74, and isoleucine 88–isoleucine 108. A 1,2-diacyl-sn-glycero-3-phospho-(1'-sn-glycerol) is bound at residue arginine 136. 3 helical membrane-spanning segments follow: residues glutamine 176 to leucine 196, glycine 206 to methionine 226, and isoleucine 236 to isoleucine 256.

It belongs to the Lgt family.

It is found in the cell membrane. The catalysed reaction is L-cysteinyl-[prolipoprotein] + a 1,2-diacyl-sn-glycero-3-phospho-(1'-sn-glycerol) = an S-1,2-diacyl-sn-glyceryl-L-cysteinyl-[prolipoprotein] + sn-glycerol 1-phosphate + H(+). The protein operates within protein modification; lipoprotein biosynthesis (diacylglyceryl transfer). Catalyzes the transfer of the diacylglyceryl group from phosphatidylglycerol to the sulfhydryl group of the N-terminal cysteine of a prolipoprotein, the first step in the formation of mature lipoproteins. This Lactobacillus acidophilus (strain ATCC 700396 / NCK56 / N2 / NCFM) protein is Phosphatidylglycerol--prolipoprotein diacylglyceryl transferase.